The chain runs to 89 residues: Antimicrobial peptide Ar-AMP (89 aa).

An N-terminal signal peptide occupies residues 1 to 25 (MVNMKSVALIVIVMMAFMMVDPSMG). Positions 26–68 (AGECVQGRCPSGMCCSQFGYCGRGPKYCGRASTTVDHQADAAA) constitute a Chitin-binding type-1 domain. 3 disulfides stabilise this stretch: C29/C40, C34/C46, and C39/C53. The propeptide at 56–89 (ASTTVDHQADAAAAAATKTANNPTDAKLAGAGSP) is removed in mature form.

Its function is as follows. Chitin-binding protein that inhibits the growth of the fungal pathogens B.cinerea, F.culmorum, H.sativum and A.consortiale, but not that of R.solani. Induces morphological changes in the fungal pathogens F.culmorum, H.sativum and R.solani, but not in A.consortiale and B.cinerea. Has antibacterial activity against the Gram-positive bacterium B.subtilis, but lacks antibacterial activity against the Gram-negative bacterium E.coli. The sequence is that of Antimicrobial peptide Ar-AMP from Amaranthus retroflexus (Redroot amaranth).